The primary structure comprises 167 residues: Thiol peroxidase (167 aa).

In terms of domain architecture, Thioredoxin spans 18–167 (VKVGDQAPDF…PIEAAKALVK (150 aa)). Catalysis depends on C60, which acts as the Cysteine sulfenic acid (-SOH) intermediate. C60 and C94 are oxidised to a cystine.

This sequence belongs to the peroxiredoxin family. Tpx subfamily. As to quaternary structure, homodimer.

It catalyses the reaction a hydroperoxide + [thioredoxin]-dithiol = an alcohol + [thioredoxin]-disulfide + H2O. Its function is as follows. Thiol-specific peroxidase that catalyzes the reduction of hydrogen peroxide and organic hydroperoxides to water and alcohols, respectively. Plays a role in cell protection against oxidative stress by detoxifying peroxides. The chain is Thiol peroxidase from Bacillus subtilis (strain 168).